The primary structure comprises 148 residues: MDIIIENRKVRFNYFIIQEFDAGIVLIGSEVKSLRQRKVSIAESYVTERNMELWLCNLHISEYTQANTKNHNPTRPRKLLLKKKQIYKISGNMKNDGFTVVPLFLYFNDKGIAKAKIVIVKGKKLHDKRETIKARDWNREKSRILRGG.

The protein belongs to the SmpB family.

Its subcellular location is the cytoplasm. Required for rescue of stalled ribosomes mediated by trans-translation. Binds to transfer-messenger RNA (tmRNA), required for stable association of tmRNA with ribosomes. tmRNA and SmpB together mimic tRNA shape, replacing the anticodon stem-loop with SmpB. tmRNA is encoded by the ssrA gene; the 2 termini fold to resemble tRNA(Ala) and it encodes a 'tag peptide', a short internal open reading frame. During trans-translation Ala-aminoacylated tmRNA acts like a tRNA, entering the A-site of stalled ribosomes, displacing the stalled mRNA. The ribosome then switches to translate the ORF on the tmRNA; the nascent peptide is terminated with the 'tag peptide' encoded by the tmRNA and targeted for degradation. The ribosome is freed to recommence translation, which seems to be the essential function of trans-translation. The chain is SsrA-binding protein from Ehrlichia ruminantium (strain Welgevonden).